A 140-amino-acid chain; its full sequence is MTKQRTLSIIKPDAVEKNVIGEIYSRFEKAGLRIIAAKMKHLSKAEAEGFYAVHKDRPFFSALVEFMISGPVMIQVLEGENAIAKNRELMGATNPKEAKAGTIRADFADSIDANAVHGSDAEDTAAQEIRYFFSDTEIFG.

Residues K11, F59, R87, T93, R104, and N114 each coordinate ATP. The Pros-phosphohistidine intermediate role is filled by H117.

It belongs to the NDK family. In terms of assembly, homotetramer. Requires Mg(2+) as cofactor.

The protein resides in the cytoplasm. It catalyses the reaction a 2'-deoxyribonucleoside 5'-diphosphate + ATP = a 2'-deoxyribonucleoside 5'-triphosphate + ADP. The catalysed reaction is a ribonucleoside 5'-diphosphate + ATP = a ribonucleoside 5'-triphosphate + ADP. Major role in the synthesis of nucleoside triphosphates other than ATP. The ATP gamma phosphate is transferred to the NDP beta phosphate via a ping-pong mechanism, using a phosphorylated active-site intermediate. The chain is Nucleoside diphosphate kinase from Francisella tularensis subsp. holarctica (strain LVS).